Consider the following 234-residue polypeptide: Zinc finger FYVE domain-containing protein 21 (234 aa).

Residues Asp-44–His-104 form an FYVE-type zinc finger. Residues Cys-50, Cys-53, Cys-66, Cys-69, Cys-74, Cys-77, Cys-96, and Cys-99 each contribute to the Zn(2+) site. A PH-like region spans residues Ala-107–Gln-234.

As to quaternary structure, interacts with PTK2/FAK1. Widely expressed.

The protein localises to the cell junction. The protein resides in the focal adhesion. It is found in the cytoplasmic vesicle. It localises to the endosome. In terms of biological role, plays a role in cell adhesion, and thereby in cell motility which requires repeated formation and disassembly of focal adhesions. Regulates microtubule-induced PTK2/FAK1 dephosphorylation, an event important for focal adhesion disassembly, as well as integrin beta-1/ITGB1 cell surface expression. The chain is Zinc finger FYVE domain-containing protein 21 (Zfyve21) from Mus musculus (Mouse).